The chain runs to 216 residues: MTYRVKEIFHTLQGEGMRAGRAAVFCRFSGCNLWTGWAQDRPAAVCPFCDTDFVGTDGPGGGVFEDAATLAAAILAAFPYKTGEGYRPYVVFTGGEPALQLDRPLIDILHAHGCEVAIETNGTVRLPEGIDWVTVSPKAGTRLAVTSGDELKLVWPQQGICPESYESLAFTYLLMQPRDGLGDAGRGDAESEAVRWCLAHPRWRLCLQTHKYLGIP.

Substrate is bound by residues 12 to 14 and R27; that span reads LQG. One can recognise a Radical SAM core domain in the interval 18–216; sequence RAGRAAVFCR…LQTHKYLGIP (199 aa). [4Fe-4S] cluster is bound by residues C31, C46, and C49. A Mg(2+)-binding site is contributed by T51. A substrate-binding site is contributed by T93. S-adenosyl-L-methionine contacts are provided by residues G95, 136-138, and 176-179; these read SPK and QPRD. P216 serves as a coordination point for substrate.

Belongs to the radical SAM superfamily. 7-carboxy-7-deazaguanine synthase family. As to quaternary structure, homodimer. Requires [4Fe-4S] cluster as cofactor. S-adenosyl-L-methionine serves as cofactor. The cofactor is Mg(2+).

It catalyses the reaction 6-carboxy-5,6,7,8-tetrahydropterin + H(+) = 7-carboxy-7-deazaguanine + NH4(+). The protein operates within purine metabolism; 7-cyano-7-deazaguanine biosynthesis. In terms of biological role, catalyzes the complex heterocyclic radical-mediated conversion of 6-carboxy-5,6,7,8-tetrahydropterin (CPH4) to 7-carboxy-7-deazaguanine (CDG), a step common to the biosynthetic pathways of all 7-deazapurine-containing compounds. The protein is 7-carboxy-7-deazaguanine synthase of Nitratidesulfovibrio vulgaris (strain ATCC 29579 / DSM 644 / CCUG 34227 / NCIMB 8303 / VKM B-1760 / Hildenborough) (Desulfovibrio vulgaris).